The following is a 388-amino-acid chain: Succinate--CoA ligase [ADP-forming] subunit beta (388 aa).

Positions 9 to 244 (KQLFARYGLP…PSQEDSREAH (236 aa)) constitute an ATP-grasp domain. ATP is bound by residues Lys-46, 53 to 55 (GRG), Glu-99, Thr-102, and Glu-107. Residues Asn-199 and Asp-213 each coordinate Mg(2+). Residues Asn-264 and 321–323 (GIV) contribute to the substrate site.

Belongs to the succinate/malate CoA ligase beta subunit family. As to quaternary structure, heterotetramer of two alpha and two beta subunits. Mg(2+) is required as a cofactor.

The catalysed reaction is succinate + ATP + CoA = succinyl-CoA + ADP + phosphate. It carries out the reaction GTP + succinate + CoA = succinyl-CoA + GDP + phosphate. It participates in carbohydrate metabolism; tricarboxylic acid cycle; succinate from succinyl-CoA (ligase route): step 1/1. Succinyl-CoA synthetase functions in the citric acid cycle (TCA), coupling the hydrolysis of succinyl-CoA to the synthesis of either ATP or GTP and thus represents the only step of substrate-level phosphorylation in the TCA. The beta subunit provides nucleotide specificity of the enzyme and binds the substrate succinate, while the binding sites for coenzyme A and phosphate are found in the alpha subunit. The sequence is that of Succinate--CoA ligase [ADP-forming] subunit beta from Pectobacterium atrosepticum (strain SCRI 1043 / ATCC BAA-672) (Erwinia carotovora subsp. atroseptica).